An 80-amino-acid chain; its full sequence is RNA-binding protein Hfq (80 aa).

The 61-residue stretch at 10–70 folds into the Sm domain; that stretch reads DIFLNQVRKE…ISTISPMKSV (61 aa).

The protein belongs to the Hfq family. As to quaternary structure, homohexamer.

In terms of biological role, RNA chaperone that binds small regulatory RNA (sRNAs) and mRNAs to facilitate mRNA translational regulation in response to envelope stress, environmental stress and changes in metabolite concentrations. Also binds with high specificity to tRNAs. The chain is RNA-binding protein Hfq from Ruminiclostridium cellulolyticum (strain ATCC 35319 / DSM 5812 / JCM 6584 / H10) (Clostridium cellulolyticum).